Reading from the N-terminus, the 160-residue chain is MAPLGVSGLVGKLSTELEVDCDAEKYYNMYKHGEDVKKAVPHLCVDVKIISGDPTSSGCIKEWNVNIDGKTIRSVEETTHDDETKTLRHRVFEGDVMKDFKKFDTIMVVNPKPDGNGCVVTRSIEYEKTNENSPTPFDYLQFGHQAIEDMNKYLRDSESN.

Ser74 is a thebaine binding site. The Proton acceptor role is filled by His89. Thr105 contacts thebaine.

This sequence belongs to the MLP family. In terms of assembly, homodimer (allosteric) and oligomers. In terms of tissue distribution, expressed in poppy latex.

The enzyme catalyses (7S)-O-acetylsalutaridinol = thebaine + acetate + H(+). Its pathway is alkaloid biosynthesis; morphine biosynthesis. With respect to regulation, slightly inhibited by salutaridine and (7S)-salutaridinol. Functionally, catalyzes the formation of thebaine from (7S)-salutaridinol 7-O-acetate at the expense of labile hydroxylated by-products, which are preferentially produced by spontaneous allylic elimination. No visible activity toward (7S)-salutaridinol (at pH 7). The polypeptide is Thebaine synthase 2 (Papaver somniferum (Opium poppy)).